Consider the following 451-residue polypeptide: Eukaryotic translation initiation factor 3 subunit E (451 aa).

The region spanning 256-425 is the PCI domain; sequence TDLFFSPAYI…GTVIMNHPPQ (170 aa).

This sequence belongs to the eIF-3 subunit E family. Component of the eukaryotic translation initiation factor 3 (eIF-3) complex.

It localises to the cytoplasm. Its function is as follows. Component of the eukaryotic translation initiation factor 3 (eIF-3) complex, which is involved in protein synthesis of a specialized repertoire of mRNAs and, together with other initiation factors, stimulates binding of mRNA and methionyl-tRNAi to the 40S ribosome. The eIF-3 complex specifically targets and initiates translation of a subset of mRNAs involved in cell proliferation. This Aspergillus oryzae (strain ATCC 42149 / RIB 40) (Yellow koji mold) protein is Eukaryotic translation initiation factor 3 subunit E (int6).